A 68-amino-acid chain; its full sequence is Alpha-conotoxin Lp1.4 (68 aa).

An N-terminal signal peptide occupies residues 1 to 21 (MGMRMMSIMFMLVVLATTVVS). Positions 22-48 (FTSDRALDAMNAAASKKASRLIALAVR) are excised as a propeptide. 2 disulfides stabilise this stretch: cysteine 50/cysteine 56 and cysteine 51/cysteine 64. Residues 52–54 (SHP) are ser-Xaa-Pro motif, crucial for potent interaction with nAChR. The residue at position 65 (aspartate 65) is an Aspartic acid 1-amide.

It belongs to the conotoxin A superfamily. In terms of tissue distribution, expressed by the venom duct.

It localises to the secreted. Functionally, alpha-conotoxins act on postsynaptic membranes, they bind to the nicotinic acetylcholine receptors (nAChR) and thus inhibit them. This toxin inhibits mouse muscle alpha-1-beta-1-gamma-delta (CHRNA1-CHRNB1-CHRNG-CHRND), and weakly rat neuronal alpha-6/alpha-3-beta-2 (CHRNA6/CHRNA3-CHRNB2). This is Alpha-conotoxin Lp1.4 from Conus leopardus (Leopard cone).